The sequence spans 472 residues: Siroheme synthase (472 aa).

Positions 1–204 are precorrin-2 dehydrogenase /sirohydrochlorin ferrochelatase; that stretch reads MDYLPIFTKL…GQTEKAIALM (204 aa). NAD(+) is bound by residues 22-23 and 43-44; these read SI and LE. Ser128 is subject to Phosphoserine. A uroporphyrinogen-III C-methyltransferase region spans residues 215–472; sequence GDVALVGAGP…SRDPFLVNLA (258 aa). Pro224 is a binding site for S-adenosyl-L-methionine. Asp247 functions as the Proton acceptor in the catalytic mechanism. Lys269 functions as the Proton donor in the catalytic mechanism. Residues 300–302, Ile305, 330–331, Met382, and Gly411 each bind S-adenosyl-L-methionine; these read GGD and TA.

It in the N-terminal section; belongs to the precorrin-2 dehydrogenase / sirohydrochlorin ferrochelatase family. This sequence in the C-terminal section; belongs to the precorrin methyltransferase family.

It catalyses the reaction uroporphyrinogen III + 2 S-adenosyl-L-methionine = precorrin-2 + 2 S-adenosyl-L-homocysteine + H(+). The enzyme catalyses precorrin-2 + NAD(+) = sirohydrochlorin + NADH + 2 H(+). It carries out the reaction siroheme + 2 H(+) = sirohydrochlorin + Fe(2+). It participates in cofactor biosynthesis; adenosylcobalamin biosynthesis; precorrin-2 from uroporphyrinogen III: step 1/1. The protein operates within cofactor biosynthesis; adenosylcobalamin biosynthesis; sirohydrochlorin from precorrin-2: step 1/1. Its pathway is porphyrin-containing compound metabolism; siroheme biosynthesis; precorrin-2 from uroporphyrinogen III: step 1/1. It functions in the pathway porphyrin-containing compound metabolism; siroheme biosynthesis; siroheme from sirohydrochlorin: step 1/1. It participates in porphyrin-containing compound metabolism; siroheme biosynthesis; sirohydrochlorin from precorrin-2: step 1/1. Multifunctional enzyme that catalyzes the SAM-dependent methylations of uroporphyrinogen III at position C-2 and C-7 to form precorrin-2 via precorrin-1. Then it catalyzes the NAD-dependent ring dehydrogenation of precorrin-2 to yield sirohydrochlorin. Finally, it catalyzes the ferrochelation of sirohydrochlorin to yield siroheme. The polypeptide is Siroheme synthase (Psychromonas ingrahamii (strain DSM 17664 / CCUG 51855 / 37)).